The sequence spans 163 residues: Nucleotide-binding protein RER_17110 (163 aa).

This sequence belongs to the YajQ family.

Functionally, nucleotide-binding protein. The chain is Nucleotide-binding protein RER_17110 from Rhodococcus erythropolis (strain PR4 / NBRC 100887).